Consider the following 224-residue polypeptide: Phosphoribosylformylglycinamidine synthase subunit PurQ (224 aa).

Residues 2–224 (TVAIIRFGGS…DGQGVLEGFR (223 aa)) form the Glutamine amidotransferase type-1 domain. The active-site Nucleophile is the C85. Active-site residues include H202 and E204. The tract at residues 204–224 (ERASLPDIGPTDGQGVLEGFR) is disordered.

In terms of assembly, part of the FGAM synthase complex composed of 1 PurL, 1 PurQ and 2 PurS subunits.

Its subcellular location is the cytoplasm. The catalysed reaction is N(2)-formyl-N(1)-(5-phospho-beta-D-ribosyl)glycinamide + L-glutamine + ATP + H2O = 2-formamido-N(1)-(5-O-phospho-beta-D-ribosyl)acetamidine + L-glutamate + ADP + phosphate + H(+). It catalyses the reaction L-glutamine + H2O = L-glutamate + NH4(+). Its pathway is purine metabolism; IMP biosynthesis via de novo pathway; 5-amino-1-(5-phospho-D-ribosyl)imidazole from N(2)-formyl-N(1)-(5-phospho-D-ribosyl)glycinamide: step 1/2. Its function is as follows. Part of the phosphoribosylformylglycinamidine synthase complex involved in the purines biosynthetic pathway. Catalyzes the ATP-dependent conversion of formylglycinamide ribonucleotide (FGAR) and glutamine to yield formylglycinamidine ribonucleotide (FGAM) and glutamate. The FGAM synthase complex is composed of three subunits. PurQ produces an ammonia molecule by converting glutamine to glutamate. PurL transfers the ammonia molecule to FGAR to form FGAM in an ATP-dependent manner. PurS interacts with PurQ and PurL and is thought to assist in the transfer of the ammonia molecule from PurQ to PurL. This Natronomonas pharaonis (strain ATCC 35678 / DSM 2160 / CIP 103997 / JCM 8858 / NBRC 14720 / NCIMB 2260 / Gabara) (Halobacterium pharaonis) protein is Phosphoribosylformylglycinamidine synthase subunit PurQ.